The primary structure comprises 79 residues: Succinate dehydrogenase assembly factor 1, mitochondrial (79 aa).

It belongs to the complex I LYR family. SDHAF1 subfamily. Interacts with sdh2 within an sdh1-sdh2 subcomplex.

It is found in the mitochondrion matrix. In terms of biological role, plays an essential role in the assembly of succinate dehydrogenase (SDH), an enzyme complex (also referred to as respiratory complex II) that is a component of both the tricarboxylic acid (TCA) cycle and the mitochondrial electron transport chain, and which couples the oxidation of succinate to fumarate with the reduction of ubiquinone (coenzyme Q) to ubiquinol. Promotes maturation of the iron-sulfur protein subunit sdh2 of the SDH catalytic dimer, protecting it from the deleterious effects of oxidants. May act together with SDHAF3. This Schizosaccharomyces pombe (strain 972 / ATCC 24843) (Fission yeast) protein is Succinate dehydrogenase assembly factor 1, mitochondrial.